Reading from the N-terminus, the 559-residue chain is Dihydroxy-acid dehydratase (559 aa).

Mg(2+) is bound at residue aspartate 80. Position 121 (cysteine 121) interacts with [2Fe-2S] cluster. 2 residues coordinate Mg(2+): aspartate 122 and lysine 123. An N6-carboxylysine modification is found at lysine 123. [2Fe-2S] cluster is bound at residue cysteine 194. Glutamate 447 provides a ligand contact to Mg(2+). Serine 473 serves as the catalytic Proton acceptor.

Belongs to the IlvD/Edd family. Homodimer. It depends on [2Fe-2S] cluster as a cofactor. Requires Mg(2+) as cofactor.

The enzyme catalyses (2R)-2,3-dihydroxy-3-methylbutanoate = 3-methyl-2-oxobutanoate + H2O. The catalysed reaction is (2R,3R)-2,3-dihydroxy-3-methylpentanoate = (S)-3-methyl-2-oxopentanoate + H2O. It functions in the pathway amino-acid biosynthesis; L-isoleucine biosynthesis; L-isoleucine from 2-oxobutanoate: step 3/4. The protein operates within amino-acid biosynthesis; L-valine biosynthesis; L-valine from pyruvate: step 3/4. Functionally, functions in the biosynthesis of branched-chain amino acids. Catalyzes the dehydration of (2R,3R)-2,3-dihydroxy-3-methylpentanoate (2,3-dihydroxy-3-methylvalerate) into 2-oxo-3-methylpentanoate (2-oxo-3-methylvalerate) and of (2R)-2,3-dihydroxy-3-methylbutanoate (2,3-dihydroxyisovalerate) into 2-oxo-3-methylbutanoate (2-oxoisovalerate), the penultimate precursor to L-isoleucine and L-valine, respectively. In Chlorobium chlorochromatii (strain CaD3), this protein is Dihydroxy-acid dehydratase.